A 208-amino-acid chain; its full sequence is Large ribosomal subunit protein bL25 (208 aa).

This sequence belongs to the bacterial ribosomal protein bL25 family. CTC subfamily. In terms of assembly, part of the 50S ribosomal subunit; part of the 5S rRNA/L5/L18/L25 subcomplex. Contacts the 5S rRNA. Binds to the 5S rRNA independently of L5 and L18.

Functionally, this is one of the proteins that binds to the 5S RNA in the ribosome where it forms part of the central protuberance. This Phenylobacterium zucineum (strain HLK1) protein is Large ribosomal subunit protein bL25.